The primary structure comprises 238 residues: ATP synthase subunit a (238 aa).

Helical transmembrane passes span 18–38, 75–95, 112–132, 179–199, and 203–223; these read LTIL…VFWA, YSLL…LGLM, NFGV…IEGI, VVTG…PLAF, and IVWT…FIIL.

The protein belongs to the ATPase A chain family. F-type ATPases have 2 components, CF(1) - the catalytic core - and CF(0) - the membrane proton channel. CF(1) has five subunits: alpha(3), beta(3), gamma(1), delta(1), epsilon(1). CF(0) has three main subunits: a(1), b(2) and c(9-12). The alpha and beta chains form an alternating ring which encloses part of the gamma chain. CF(1) is attached to CF(0) by a central stalk formed by the gamma and epsilon chains, while a peripheral stalk is formed by the delta and b chains.

Its subcellular location is the cell membrane. Functionally, key component of the proton channel; it plays a direct role in the translocation of protons across the membrane. The sequence is that of ATP synthase subunit a from Streptococcus agalactiae serotype III (strain NEM316).